The chain runs to 206 residues: Small ribosomal subunit protein uS4 (206 aa).

The 61-residue stretch at 96-156 (TRLDNVVYRM…EKSRTQARIK (61 aa)) folds into the S4 RNA-binding domain.

It belongs to the universal ribosomal protein uS4 family. In terms of assembly, part of the 30S ribosomal subunit. Contacts protein S5. The interaction surface between S4 and S5 is involved in control of translational fidelity.

Its function is as follows. One of the primary rRNA binding proteins, it binds directly to 16S rRNA where it nucleates assembly of the body of the 30S subunit. With S5 and S12 plays an important role in translational accuracy. The protein is Small ribosomal subunit protein uS4 of Shewanella denitrificans (strain OS217 / ATCC BAA-1090 / DSM 15013).